The primary structure comprises 664 residues: MPAVDKLLLEEALQDSPQTRSLLSVFEEDAGTLTDYTNQLLQAMQRVYGAQNEMCLATQQLSKQLLAYEKQNFALGKGDEEVISTLHYFSKVVDELNLLHTELAKQLADTMVLPIIQFREKDLTEVSTLKDLFGLASNEHDLSMAKYSRLPKKKENEKVKTEVGKEVAAARRKQHLSSLQYYCALNALQYRKQMAMMEPMIGFAHGQINFFKKGAEMFSKRMDSFLSSVADMVQSIQVELEAEAEKMRVSQQELLSVDESVYTPDSDVAAPQINRNLIQKAGYLNLRNKTGLVTTTWERLYFFTQGGNLMCQPRGAVAGGLIQDLDNCSVMAVDCEDRRYCFQITTPNGKSGIILQAESRKENEEWICAINNISRQIYLTDNPEAVAIKLNQTALQAVTPITSFGKKQESSCPSQNLKNSEMENENDKIVPKATASLPEAEELIAPGTPIQFDIVLPATEFLDQNRGSRRTNPFGETEDESFPEAEDSLLQQMFIVRFLGSMAVKTDSTTEVIYEAMRQVLAARAIHNIFRMTESHLMVTSQSLRLIDPQTQVSRANFELTSVTQFAAHQENKRLVGFVIRVPESTGEESLSTYIFESNSEGEKICYAINLGKEIIEVQKDPEALAQLMLSIPLTNDGKYVLLNDQPDDDDGNPNEHRGAESEA.

Residues 1 to 428 are required for RAB5A binding; sequence MPAVDKLLLE…NSEMENENDK (428 aa). Positions 3–268 constitute a BAR domain; sequence AVDKLLLEEA…ESVYTPDSDV (266 aa). In terms of domain architecture, PH spans 277–375; that stretch reads LIQKAGYLNL…WICAINNISR (99 aa). The PID domain occupies 488–637; the sequence is SLLQQMFIVR…LMLSIPLTND (150 aa). The interval 643–664 is disordered; it reads LNDQPDDDDGNPNEHRGAESEA. The segment covering 654-664 has biased composition (basic and acidic residues); it reads PNEHRGAESEA.

In terms of assembly, homodimer. Homotetramer. Binds RAB5A/Rab5 through an N-terminal domain. This interaction is essential for its recruitment to endosomal membranes as well as its role in cell proliferation. Binds subunits of the NuRD/MeCP1 complex. Interacts with FSHR; interaction is independent of follicle stimulating hormone stimulation. Interacts with APPL1; the interaction is decreased by adiponectin in a time-dependent manner. Forms a complex comprising APPL1, RUVBL2, CTNNB1, HDAC1 and HDAC2; interaction reduces interaction between CTNNB1, HDAC1, HDAC2 and RUVBL2 leading to the decrease of deacetylase activity of this complex; affects the recruitment of repressive complexes to the Wnt target genes. Interacts (via BAR domain) with TBC1D1; interaction is dependent of TBC1D1 phosphorylation at 'Ser-235'; interaction diminishes the phosphorylation of TBC1D1 at 'Thr-596', resulting in inhibition of SLC2A4 translocation and glucose uptake. Interacts with ANXA2; targets APPL2 to endosomes and acting in parallel to RAB5A. Interacts with RAB31 (in GTP-bound form); interaction contributes to or enhances recruitment of APPL2 to the phagosomes; interaction enhances Fc-gamma receptor-mediated phagocytosis through PI3K/Akt signaling in macrophages. Interacts with PIK3R1; forms a complex with PIK3R1 and APPL1. Interacts (via BAR domain) with ADIPOR1; hinders the accessibility of APPL1 to ADIPOR1; negatively regulates adiponectin signaling; ADIPOQ dissociates this interaction and facilitates the recruitment of APPL1 to ADIPOR1. Interacts (via BAR domain) with ADIPOR2; ADIPOQ dissociates this interaction. As to expression, high levels in brain, heart, kidney and skeletal muscle.

The protein resides in the early endosome membrane. Its subcellular location is the nucleus. The protein localises to the cell membrane. It localises to the endosome membrane. It is found in the cytoplasm. The protein resides in the cytoplasmic vesicle. Its subcellular location is the phagosome. The protein localises to the cell projection. It localises to the ruffle. It is found in the ruffle membrane. The protein resides in the phagosome membrane. In terms of biological role, multifunctional adapter protein that binds to various membrane receptors, nuclear factors and signaling proteins to regulate many processes, such as cell proliferation, immune response, endosomal trafficking and cell metabolism. Regulates signaling pathway leading to cell proliferation through interaction with RAB5A and subunits of the NuRD/MeCP1 complex. Plays a role in immune response by modulating phagocytosis, inflammatory and innate immune responses. In macrophages, enhances Fc-gamma receptor-mediated phagocytosis through interaction with RAB31 leading to activation of PI3K/Akt signaling. In response to LPS, modulates inflammatory responses by playing a key role on the regulation of TLR4 signaling and in the nuclear translocation of RELA/NF-kappa-B p65 and the secretion of pro- and anti-inflammatory cytokines. Also functions as a negative regulator of innate immune response via inhibition of AKT1 signaling pathway by forming a complex with APPL1 and PIK3R1. Plays a role in endosomal trafficking of TGFBR1 from the endosomes to the nucleus. Plays a role in cell metabolism by regulating adiponecting ans insulin signaling pathways and adaptative thermogenesis. In muscle, negatively regulates adiponectin-simulated glucose uptake and fatty acid oxidation by inhibiting adiponectin signaling pathway through APPL1 sequestration thereby antagonizing APPL1 action. In muscles, negatively regulates insulin-induced plasma membrane recruitment of GLUT4 and glucose uptake through interaction with TBC1D1. Plays a role in cold and diet-induced adaptive thermogenesis by activating ventromedial hypothalamus (VMH) neurons throught AMPK inhibition which enhances sympathetic outflow to subcutaneous white adipose tissue (sWAT), sWAT beiging and cold tolerance. Also plays a role in other signaling pathways namely Wnt/beta-catenin, HGF and glucocorticoid receptor signaling. Positive regulator of beta-catenin/TCF-dependent transcription through direct interaction with RUVBL2/reptin resulting in the relief of RUVBL2-mediated repression of beta-catenin/TCF target genes by modulating the interactions within the beta-catenin-reptin-HDAC complex. May affect adult neurogenesis in hippocampus and olfactory system via regulating the sensitivity of glucocorticoid receptor. Required for fibroblast migration through HGF cell signaling. In Homo sapiens (Human), this protein is DCC-interacting protein 13-beta.